We begin with the raw amino-acid sequence, 490 residues long: Tegument protein VP16 (490 aa).

Positions 12–37 (MDADGASPPPPRPAGGPKNTPAAPPL) are disordered. Phosphoserine occurs at positions 18, 353, 411, and 452. A transcriptional activation region spans residues 411 to 490 (STAPPTDVSL…DALGIDEYGG (80 aa)).

It belongs to the herpesviridae tegument protein VP16 protein family. Interacts with VP22. Interacts with gH (via C-terminus). Interacts with the virion host shutoff protein (vhs). Interacts with VP11/12. Associates with the VP16-induced complex; binding to host HCFC1 activates VP16 for association with the octamer motif-binding host protein POU2F1, to form a multiprotein-DNA complex responsible for activating transcription of the viral immediate early genes.

Its subcellular location is the virion tegument. It is found in the host nucleus. In terms of biological role, transcriptional activator of immediate-early (IE) gene products (alpha genes). Acts as a key activator of lytic infection by initiating the lytic program through the assembly of the transcriptional regulatory VP16-induced complex composed of VP16 and two cellular factors, HCFC1 and POU2F 1. VP16-induced complex represents a regulatory switch: when it is on, it promotes IE-gene expression and thus lytic infection, and when it is off, it limits IE-gene transcription favoring latent infection. May play a role in the aggregation of tegument proteins around nucleocapsids during virus morphogenesis. In Homo sapiens (Human), this protein is Tegument protein VP16.